We begin with the raw amino-acid sequence, 416 residues long: Probable glucan 1,3-beta-glucosidase A (416 aa).

The first 22 residues, 1 to 22 (MIFKFSQKALVALCLVVGLAEA), serve as a signal peptide directing secretion. Glu211 (proton donor) is an active-site residue. 2 disulfides stabilise this stretch: Cys291/Cys415 and Cys316/Cys342. The active-site Nucleophile is Glu308.

The protein belongs to the glycosyl hydrolase 5 (cellulase A) family. In terms of assembly, monomer. Requires Mn(2+) as cofactor.

It is found in the secreted. The enzyme catalyses Successive hydrolysis of beta-D-glucose units from the non-reducing ends of (1-&gt;3)-beta-D-glucans, releasing alpha-glucose.. Its function is as follows. Beta-glucanases participate in the metabolism of beta-glucan, the main structural component of the cell wall. It could also function biosynthetically as a transglycosylase. The chain is Probable glucan 1,3-beta-glucosidase A (exgA) from Neosartorya fischeri (strain ATCC 1020 / DSM 3700 / CBS 544.65 / FGSC A1164 / JCM 1740 / NRRL 181 / WB 181) (Aspergillus fischerianus).